A 270-amino-acid chain; its full sequence is Thiazole synthase (270 aa).

Lys111 acts as the Schiff-base intermediate with DXP in catalysis. 1-deoxy-D-xylulose 5-phosphate contacts are provided by residues Gly172, 198–199 (AG), and 220–221 (NT).

It belongs to the ThiG family. Homotetramer. Forms heterodimers with either ThiH or ThiS.

It is found in the cytoplasm. It catalyses the reaction [ThiS sulfur-carrier protein]-C-terminal-Gly-aminoethanethioate + 2-iminoacetate + 1-deoxy-D-xylulose 5-phosphate = [ThiS sulfur-carrier protein]-C-terminal Gly-Gly + 2-[(2R,5Z)-2-carboxy-4-methylthiazol-5(2H)-ylidene]ethyl phosphate + 2 H2O + H(+). It participates in cofactor biosynthesis; thiamine diphosphate biosynthesis. Functionally, catalyzes the rearrangement of 1-deoxy-D-xylulose 5-phosphate (DXP) to produce the thiazole phosphate moiety of thiamine. Sulfur is provided by the thiocarboxylate moiety of the carrier protein ThiS. In vitro, sulfur can be provided by H(2)S. This Methylococcus capsulatus (strain ATCC 33009 / NCIMB 11132 / Bath) protein is Thiazole synthase.